The chain runs to 218 residues: Small ribosomal subunit protein uS3c (218 aa).

The KH type-2 domain occupies 47-118; sequence VQKNMRISSG…RLNIAITRVA (72 aa).

The protein belongs to the universal ribosomal protein uS3 family. Part of the 30S ribosomal subunit.

Its subcellular location is the plastid. The protein localises to the chloroplast. This is Small ribosomal subunit protein uS3c (rps3) from Calycanthus floridus var. glaucus (Eastern sweetshrub).